The following is a 1098-amino-acid chain: Trehalose synthase complex regulatory subunit TSL1 (1098 aa).

A phosphoserine mark is found at S49, S53, S56, S71, S77, S135, S147, and S161. Disordered regions lie at residues 59–86, 129–168, and 192–244; these read APAPEQGVPPAISRSATRSPSAFNRASS, SVERFFSPSSNIPTDRIASPIQHEHDSGSRIASPIQQQQQ, and SQTS…PSIK. Over residues 72–86 the composition is skewed to polar residues; that stretch reads RSATRSPSAFNRASS. 2 consecutive repeat copies span residues 144–150 and 158–164. Residues 144 to 164 are 2 X 7 AA repeats of R-I-A-S-P-I-Q; the sequence is RIASPIQHEHDSGSRIASPIQ. The segment covering 213–227 has biased composition (polar residues); the sequence is RPTSAATSLVNRTKQ. The span at 228–242 shows a compositional bias: low complexity; the sequence is GSASSGSSGSSAPPS. Residue S229 is modified to Phosphoserine. Residue T251 is modified to Phosphothreonine. A disordered region spans residues 274 to 297; that stretch reads ADISSSETSSQHNESDPDDLTTAP. Position 303 is a phosphoserine (S303). Residues 320 to 812 form a TPS complex domain region; that stretch reads GGYSNKSKLK…FNQEGSKIFK (493 aa). T815 is subject to Phosphothreonine. Residues 1000–1027 are disordered; the sequence is SSGQITNIQTPSQQNPSDQEQQPPASPT.

The protein in the C-terminal section; belongs to the glycosyltransferase 20 family. In terms of assembly, the trehalose synthase complex is composed of the two catalytic subunits TPS1 and TPS2, and at least one of the two regulatory subunits TPS3 or TSL1.

The protein localises to the cytoplasm. Regulatory subunit of the trehalose synthase complex that catalyzes the production of trehalose from glucose-6-phosphate and UDP-glucose in a two step process. May stabilize the trehalose synthase complex, and confer sensitivity to physiological concentrations of phosphate and to fructose 6-phosphate. This chain is Trehalose synthase complex regulatory subunit TSL1 (TSL1), found in Saccharomyces cerevisiae (strain ATCC 204508 / S288c) (Baker's yeast).